The sequence spans 581 residues: uncharacterized protein (581 aa).

This sequence belongs to the UbiD family.

This is an uncharacterized protein from Chlamydia caviae (strain ATCC VR-813 / DSM 19441 / 03DC25 / GPIC) (Chlamydophila caviae).